A 302-amino-acid chain; its full sequence is Digeranylgeranylglyceryl phosphate synthase (302 aa).

8 helical membrane passes run 21 to 41 (LVVA…IYGG), 43 to 63 (IVSS…AGGY), 103 to 123 (IGLI…FAVL), 144 to 164 (IVIA…ASCM), 167 to 187 (GKVV…LLVL), 218 to 238 (AYMA…FPYI), 244 to 264 (MAYL…LAIL), and 282 to 302 (ARSA…AGLM).

This sequence belongs to the UbiA prenyltransferase family. DGGGP synthase subfamily. The cofactor is Mg(2+).

The protein localises to the cell membrane. The enzyme catalyses sn-3-O-(geranylgeranyl)glycerol 1-phosphate + (2E,6E,10E)-geranylgeranyl diphosphate = 2,3-bis-O-(geranylgeranyl)-sn-glycerol 1-phosphate + diphosphate. It functions in the pathway membrane lipid metabolism; glycerophospholipid metabolism. Functionally, prenyltransferase that catalyzes the transfer of the geranylgeranyl moiety of geranylgeranyl diphosphate (GGPP) to the C2 hydroxyl of (S)-3-O-geranylgeranylglyceryl phosphate (GGGP). This reaction is the second ether-bond-formation step in the biosynthesis of archaeal membrane lipids. The chain is Digeranylgeranylglyceryl phosphate synthase from Hyperthermus butylicus (strain DSM 5456 / JCM 9403 / PLM1-5).